We begin with the raw amino-acid sequence, 202 residues long: Securin-2 (202 aa).

The interval 60–105 is disordered; sequence TRKALGTVNRATEKSVKTNGPRKQKQPSFSAKKMTEKTVKTKSSVP. A D-box motif is present at residues 61–64; the sequence is RKAL. The short motif at 163 to 173 is the SH3-binding element; it reads PPSPVKMPSPP.

It belongs to the securin family. In terms of tissue distribution, expressed at low levels in the pituitary, liver, spleen, prostate, testis, ovary, small intestine and colon. Also expressed in various pituitary, testicular, liver and ovarian tumors.

It localises to the cytoplasm. The protein localises to the nucleus. The polypeptide is Securin-2 (PTTG2) (Homo sapiens (Human)).